Here is a 202-residue protein sequence, read N- to C-terminus: MNPEYDYLFKLLLIGDSGVGKSCLLLRFADDTYTESYISTIGVDFKIRTIELDGKTIKLQIWDTAGQERFRTITSSYYRGAHGIIVVYDVTDQESFNNVKQWLQEIDRYASENVNKLLVGNKCDLTTKKVVDYTTAKEFADSLGIPFLETSAKNATNVEQAFMTMAAEIKKRMGPGATSGGSEKSNVNIQSTPVKSSGGGCC.

GTP is bound by residues 15–23 (GDSGVGKSC), 33–40 (YTESYIST), 63–67 (DTAGQ), 121–124 (NKCD), and 151–153 (SAK). Positions 37 to 45 (YISTIGVDF) match the Effector region motif. Residues 173-202 (MGPGATSGGSEKSNVNIQSTPVKSSGGGCC) form a disordered region. The segment covering 180 to 195 (GGSEKSNVNIQSTPVK) has biased composition (polar residues). 2 S-geranylgeranyl cysteine lipidation sites follow: Cys-201 and Cys-202.

The protein belongs to the small GTPase superfamily. Rab family.

Its subcellular location is the cell membrane. Its function is as follows. Protein transport. Probably involved in vesicular traffic. This is Ras-related protein ORAB-1 from Diplobatis ommata (Ocellated electric ray).